Here is a 263-residue protein sequence, read N- to C-terminus: uncharacterized protein (263 aa).

13-20 (TGSTSGIG) is an NADP(+) binding site. Ser-141 provides a ligand contact to substrate. Tyr-154 (proton acceptor) is an active-site residue.

This sequence belongs to the short-chain dehydrogenases/reductases (SDR) family.

This is an uncharacterized protein from Bacillus subtilis (strain 168).